Consider the following 426-residue polypeptide: Synaptotagmin-13 (426 aa).

Over methionine 1 to proline 6 the chain is Vesicular. The helical transmembrane segment at valine 7 to leucine 29 threads the bilayer. Topologically, residues cysteine 30–leucine 426 are cytoplasmic. C2 domains are found at residues glutamine 158–glycine 275 and glycine 287–histidine 422.

The protein belongs to the synaptotagmin family. As to quaternary structure, interacts with NRXN1. Expressed in brain, pancreas and kidney.

It is found in the membrane. In terms of biological role, may be involved in transport vesicle docking to the plasma membrane. The protein is Synaptotagmin-13 (SYT13) of Homo sapiens (Human).